Consider the following 117-residue polypeptide: Large ribosomal subunit protein bL19 (117 aa).

This sequence belongs to the bacterial ribosomal protein bL19 family.

Functionally, this protein is located at the 30S-50S ribosomal subunit interface and may play a role in the structure and function of the aminoacyl-tRNA binding site. This chain is Large ribosomal subunit protein bL19, found in Proteus mirabilis (strain HI4320).